Reading from the N-terminus, the 166-residue chain is Tetranectin-like protein (166 aa).

Cystine bridges form between C37–C47, C64–C160, and C136–C152. One can recognise a C-type lectin domain in the interval 43-161 (IHKKCYLASR…CRSEKRYICE (119 aa)).

This is Tetranectin-like protein from Carcharhinus perezii (Reef shark).